Reading from the N-terminus, the 366-residue chain is Ribosomal RNA large subunit methyltransferase M (366 aa).

S-adenosyl-L-methionine-binding positions include S188, 221 to 224 (CPGG), D240, D260, and D277. Residue K306 is the Proton acceptor of the active site.

It belongs to the class I-like SAM-binding methyltransferase superfamily. RNA methyltransferase RlmE family. RlmM subfamily. As to quaternary structure, monomer.

The protein resides in the cytoplasm. It catalyses the reaction cytidine(2498) in 23S rRNA + S-adenosyl-L-methionine = 2'-O-methylcytidine(2498) in 23S rRNA + S-adenosyl-L-homocysteine + H(+). In terms of biological role, catalyzes the 2'-O-methylation at nucleotide C2498 in 23S rRNA. This chain is Ribosomal RNA large subunit methyltransferase M, found in Shigella dysenteriae serotype 1 (strain Sd197).